The primary structure comprises 416 residues: D-amino acid dehydrogenase (416 aa).

3–17 serves as a coordination point for FAD; the sequence is VTILGAGVIGVTTAY.

This sequence belongs to the DadA oxidoreductase family. FAD is required as a cofactor.

It catalyses the reaction a D-alpha-amino acid + A + H2O = a 2-oxocarboxylate + AH2 + NH4(+). Its pathway is amino-acid degradation; D-alanine degradation; NH(3) and pyruvate from D-alanine: step 1/1. Its function is as follows. Oxidative deamination of D-amino acids. This Rhizobium rhizogenes (strain K84 / ATCC BAA-868) (Agrobacterium radiobacter) protein is D-amino acid dehydrogenase.